The following is a 316-amino-acid chain: 4-hydroxy-3-methylbut-2-enyl diphosphate reductase (316 aa).

Cys12 is a [4Fe-4S] cluster binding site. His41 and His74 together coordinate (2E)-4-hydroxy-3-methylbut-2-enyl diphosphate. Positions 41 and 74 each coordinate dimethylallyl diphosphate. 2 residues coordinate isopentenyl diphosphate: His41 and His74. Cys96 lines the [4Fe-4S] cluster pocket. (2E)-4-hydroxy-3-methylbut-2-enyl diphosphate is bound at residue His124. His124 provides a ligand contact to dimethylallyl diphosphate. His124 contributes to the isopentenyl diphosphate binding site. The active-site Proton donor is the Glu126. Thr167 is a binding site for (2E)-4-hydroxy-3-methylbut-2-enyl diphosphate. Cys197 provides a ligand contact to [4Fe-4S] cluster. Positions 225, 226, 227, and 269 each coordinate (2E)-4-hydroxy-3-methylbut-2-enyl diphosphate. Residues Ser225, Ser226, Asn227, and Ser269 each contribute to the dimethylallyl diphosphate site. Residues Ser225, Ser226, Asn227, and Ser269 each contribute to the isopentenyl diphosphate site.

The protein belongs to the IspH family. In terms of assembly, homodimer. It depends on [4Fe-4S] cluster as a cofactor.

It catalyses the reaction isopentenyl diphosphate + 2 oxidized [2Fe-2S]-[ferredoxin] + H2O = (2E)-4-hydroxy-3-methylbut-2-enyl diphosphate + 2 reduced [2Fe-2S]-[ferredoxin] + 2 H(+). It carries out the reaction dimethylallyl diphosphate + 2 oxidized [2Fe-2S]-[ferredoxin] + H2O = (2E)-4-hydroxy-3-methylbut-2-enyl diphosphate + 2 reduced [2Fe-2S]-[ferredoxin] + 2 H(+). The protein operates within isoprenoid biosynthesis; dimethylallyl diphosphate biosynthesis; dimethylallyl diphosphate from (2E)-4-hydroxy-3-methylbutenyl diphosphate: step 1/1. It functions in the pathway isoprenoid biosynthesis; isopentenyl diphosphate biosynthesis via DXP pathway; isopentenyl diphosphate from 1-deoxy-D-xylulose 5-phosphate: step 6/6. Its function is as follows. Catalyzes the conversion of 1-hydroxy-2-methyl-2-(E)-butenyl 4-diphosphate (HMBPP) into a mixture of isopentenyl diphosphate (IPP) and dimethylallyl diphosphate (DMAPP). Acts in the terminal step of the DOXP/MEP pathway for isoprenoid precursor biosynthesis. This Salmonella paratyphi C (strain RKS4594) protein is 4-hydroxy-3-methylbut-2-enyl diphosphate reductase.